The sequence spans 882 residues: Alanine--tRNA ligase (882 aa).

The Zn(2+) site is built by H564, H568, C666, and H670.

The protein belongs to the class-II aminoacyl-tRNA synthetase family. Zn(2+) serves as cofactor.

Its subcellular location is the cytoplasm. It catalyses the reaction tRNA(Ala) + L-alanine + ATP = L-alanyl-tRNA(Ala) + AMP + diphosphate. Catalyzes the attachment of alanine to tRNA(Ala) in a two-step reaction: alanine is first activated by ATP to form Ala-AMP and then transferred to the acceptor end of tRNA(Ala). Also edits incorrectly charged Ser-tRNA(Ala) and Gly-tRNA(Ala) via its editing domain. In Rubrobacter xylanophilus (strain DSM 9941 / JCM 11954 / NBRC 16129 / PRD-1), this protein is Alanine--tRNA ligase.